A 352-amino-acid chain; its full sequence is RNA demethylase ALKBH5 (352 aa).

Over residues 18-34 (RDKVFEYSNGEKRKYRE) the composition is skewed to basic and acidic residues. The tract at residues 18 to 47 (RDKVFEYSNGEKRKYRESDDDESEYEERRD) is disordered. Tyr-107 is an active-site residue. 2-oxoglutarate is bound by residues Asn-161, Tyr-163, and His-172. Fe cation-binding residues include His-172, Asp-174, and His-234. Cys-198 and Cys-235 are joined by a disulfide. 2-oxoglutarate is bound by residues His-234 and Arg-245. Residues 260–352 (LDSNSLSPSI…PTRRVKMRRH (93 aa)) form a disordered region. Basic residues predominate over residues 272-285 (PKRRHILKAKRSHR). Basic and acidic residues-rich tracts occupy residues 286-306 (KADP…ELQR) and 315-343 (RHDD…DHAP).

This sequence belongs to the alkB family. In terms of assembly, monomer. The cofactor is Fe(2+).

It localises to the nucleus speckle. The enzyme catalyses an N(6)-methyladenosine in mRNA + 2-oxoglutarate + O2 = an adenosine in mRNA + formaldehyde + succinate + CO2. Dioxygenase that specifically demethylates N(6)-methyladenosine (m6A) RNA, the most prevalent internal modification of messenger RNA (mRNA) in higher eukaryotes. Demethylates RNA by oxidative demethylation, which requires molecular oxygen, alpha-ketoglutarate and iron. Demethylation of m6A mRNA affects mRNA processing, translation and export. The chain is RNA demethylase ALKBH5 (alkbh5) from Danio rerio (Zebrafish).